A 92-amino-acid chain; its full sequence is Protein S100-B (92 aa).

At Ser-2 the chain carries N-acetylserine. EF-hand domains lie at 13-48 (DVFHQYSGREGDKHKLKKSELKELINNELSHFLEEI) and 49-84 (KEQEVVDKVMETLDEDGDGECDFQEFMAFVSMVTTA). His-16 contacts Zn(2+). Ca(2+) is bound by residues Ser-19 and Glu-22. His-26 contacts Zn(2+). Residues Lys-27, Glu-32, Asp-62, Asp-64, Asp-66, Glu-68, and Glu-73 each coordinate Ca(2+). His-86 and His-91 together coordinate Zn(2+).

The protein belongs to the S-100 family. Dimer of either two alpha chains, or two beta chains, or one alpha and one beta chain. The S100B dimer binds two molecules of STK38. Interacts with CACYBP in a calcium-dependent manner. Interacts with ATAD3A; this interaction probably occurs in the cytosol prior to ATAD3A mitochondrial targeting. Interacts with S100A6. The S100B dimer interacts with two molecules of CAPZA1. Interacts with AGER. Interacts with PPP5C (via TPR repeats); the interaction is calcium-dependent and modulates PPP5C activity. Interacts with TPPP; this interaction inhibits TPPP dimerization. Interacts with isoform CLSTN3beta of CLSTN3; interaction promotes secretion. In terms of tissue distribution, although predominant among the water-soluble brain proteins, S100 is also found in a variety of other tissues.

The protein localises to the cytoplasm. Its subcellular location is the nucleus. The protein resides in the secreted. Functionally, small zinc- and- and calcium-binding protein that is highly expressed in astrocytes and constitutes one of the most abundant soluble proteins in brain. Weakly binds calcium but binds zinc very tightly-distinct binding sites with different affinities exist for both ions on each monomer. Physiological concentrations of potassium ion antagonize the binding of both divalent cations, especially affecting high-affinity calcium-binding sites. Acts as a neurotrophic factor that promotes astrocytosis and axonal proliferation. Involved in innervation of thermogenic adipose tissue by acting as an adipocyte-derived neurotrophic factor that promotes sympathetic innervation of adipose tissue. Binds to and initiates the activation of STK38 by releasing autoinhibitory intramolecular interactions within the kinase. Interaction with AGER after myocardial infarction may play a role in myocyte apoptosis by activating ERK1/2 and p53/TP53 signaling. Could assist ATAD3A cytoplasmic processing, preventing aggregation and favoring mitochondrial localization. May mediate calcium-dependent regulation on many physiological processes by interacting with other proteins, such as TPR-containing proteins, and modulating their activity. The sequence is that of Protein S100-B from Rattus norvegicus (Rat).